Reading from the N-terminus, the 203-residue chain is MIGKLSGKIDSQGDDYIIIDVNGVGYLVYASGKTLGKLAEGEFYKLFIETHVREEHIHLYGFLTLEEKNFFNLLQSVNGIGTRMALSILSSLTPSDIQIAINNEDKNIFKAISGVGAKLAERIVLELKGKVAKISSGSVIIKDSLNIKNITPVASNEVIKALVNLGFSRFEAQNAVQGIIIQNPEISIDELIKTALKNRNAGL.

Positions Met1–Leu63 are domain I. The tract at residues Thr64–Lys142 is domain II. Residues Asp143 to Asn149 are flexible linker. A domain III region spans residues Ile150–Leu203.

Belongs to the RuvA family. In terms of assembly, homotetramer. Forms an RuvA(8)-RuvB(12)-Holliday junction (HJ) complex. HJ DNA is sandwiched between 2 RuvA tetramers; dsDNA enters through RuvA and exits via RuvB. An RuvB hexamer assembles on each DNA strand where it exits the tetramer. Each RuvB hexamer is contacted by two RuvA subunits (via domain III) on 2 adjacent RuvB subunits; this complex drives branch migration. In the full resolvosome a probable DNA-RuvA(4)-RuvB(12)-RuvC(2) complex forms which resolves the HJ.

Its subcellular location is the cytoplasm. Its function is as follows. The RuvA-RuvB-RuvC complex processes Holliday junction (HJ) DNA during genetic recombination and DNA repair, while the RuvA-RuvB complex plays an important role in the rescue of blocked DNA replication forks via replication fork reversal (RFR). RuvA specifically binds to HJ cruciform DNA, conferring on it an open structure. The RuvB hexamer acts as an ATP-dependent pump, pulling dsDNA into and through the RuvAB complex. HJ branch migration allows RuvC to scan DNA until it finds its consensus sequence, where it cleaves and resolves the cruciform DNA. This is Holliday junction branch migration complex subunit RuvA from Rickettsia felis (strain ATCC VR-1525 / URRWXCal2) (Rickettsia azadi).